Consider the following 195-residue polypeptide: Protein Nef (195 aa).

Glycine 2 carries N-myristoyl glycine; by host lipidation. An N-terminal; associates with the host plasma membrane region spans residues 2–53 (GNIFGRWPGARKAIEDLHNTSSEPVGQASQDLQNKGGLTTNTLGTSADVLEY). The segment at 7-22 (RWPGARKAIEDLHNTS) is necessary for MHC-I internalization. The segment at 59-61 (EEE) is acidic. The tract at residues 65–74 (PVRPAVPMRP) is SH3-binding. The SH3-binding; interaction with Src family tyrosine kinases stretch occupies residues 65 to 74 (PVRPAVPMRP). A PxxP motif is present at residues 68 to 71 (PAVP). Positions 104-120 (AILDTWMYNTQGVFPDW) are mediates dimerization. The tract at residues 144 to 171 (VDPPEDDEKNILLHPACSHGTTDPDGET) is binding to ATP6V1H. The short motif at 155-156 (LL) is the Di-leucine internalization motif; necessary for CD4 internalization element.

It belongs to the lentivirus primate group Nef protein family. In terms of assembly, homodimer.

The protein localises to the host cell membrane. It is found in the host cytoplasm. Its subcellular location is the host perinuclear region. The protein resides in the virion. It localises to the secreted. Functionally, factor of infectivity and pathogenicity, required for optimal virus replication. Alters numerous pathways of T-lymphocyte function and down-regulates immunity surface molecules in order to evade host defense and increase viral infectivity. Alters the functionality of other immunity cells, like dendritic cells, monocytes/macrophages and NK cells. One of the earliest and most abundantly expressed viral proteins. In infected CD4(+) T-lymphocytes, down-regulates the surface MHC-I, mature MHC-II, CD4, CD28 and probably other immunity surface molecules. In consequence infected cells are masked for immune recognition by cytotoxic T-lymphocytes. Decreasing the number of immune receptors also prevents reinfection by more HIV particles (superinfection). Its function is as follows. Bypasses host T-cell signaling by inducing a transcriptional program nearly identical to that of anti-CD3 cell activation. Interaction with TCR-zeta chain up-regulates the Fas ligand (FasL). Increasing surface FasL molecules and decreasing surface MHC-I molecules on infected CD4(+) cells send attacking cytotoxic CD8+ T-lymphocytes into apoptosis. In terms of biological role, plays a role in optimizing the host cell environment for viral replication without causing cell death by apoptosis. Protects the infected cells from apoptosis in order to keep them alive until the next virus generation is ready to strike. The sequence is that of Protein Nef from Pan troglodytes (Chimpanzee).